Reading from the N-terminus, the 118-residue chain is Large ribosomal subunit protein uL18 (118 aa).

The protein belongs to the universal ribosomal protein uL18 family. As to quaternary structure, part of the 50S ribosomal subunit; part of the 5S rRNA/L5/L18/L25 subcomplex. Contacts the 5S and 23S rRNAs.

This is one of the proteins that bind and probably mediate the attachment of the 5S RNA into the large ribosomal subunit, where it forms part of the central protuberance. This chain is Large ribosomal subunit protein uL18, found in Myxococcus xanthus (strain DK1622).